The chain runs to 294 residues: Proteasome subunit beta (294 aa).

The propeptide at 1–65 (MTADRPALRT…MESGDLAPHG (65 aa)) is removed in mature form; by autocatalysis. The Nucleophile role is filled by threonine 66.

The protein belongs to the peptidase T1B family. As to quaternary structure, the 20S proteasome core is composed of 14 alpha and 14 beta subunits that assemble into four stacked heptameric rings, resulting in a barrel-shaped structure. The two inner rings, each composed of seven catalytic beta subunits, are sandwiched by two outer rings, each composed of seven alpha subunits. The catalytic chamber with the active sites is on the inside of the barrel. Has a gated structure, the ends of the cylinder being occluded by the N-termini of the alpha-subunits. Is capped by the proteasome-associated ATPase, ARC.

The protein localises to the cytoplasm. The catalysed reaction is Cleavage of peptide bonds with very broad specificity.. It functions in the pathway protein degradation; proteasomal Pup-dependent pathway. Its activity is regulated as follows. The formation of the proteasomal ATPase ARC-20S proteasome complex, likely via the docking of the C-termini of ARC into the intersubunit pockets in the alpha-rings, may trigger opening of the gate for substrate entry. Interconversion between the open-gate and close-gate conformations leads to a dynamic regulation of the 20S proteasome proteolysis activity. Its function is as follows. Component of the proteasome core, a large protease complex with broad specificity involved in protein degradation. The chain is Proteasome subunit beta from Rhodococcus opacus (strain B4).